Here is a 214-residue protein sequence, read N- to C-terminus: Putative ankyrin repeat protein R844 (214 aa).

ANK repeat units lie at residues 41–70 (VEKN…QNKF), 81–110 (SLDK…NVKT), 111–140 (DNNM…DVRA), 142–170 (NDCA…DVTS), and 172–200 (NNFA…DIRA).

The polypeptide is Putative ankyrin repeat protein R844 (Acanthamoeba polyphaga mimivirus (APMV)).